The primary structure comprises 298 residues: Inosose dehydratase (298 aa).

This sequence belongs to the IolE/MocC family. Requires glutathione as cofactor. Co(2+) serves as cofactor. Mn(2+) is required as a cofactor.

The catalysed reaction is scyllo-inosose = 3D-3,5/4-trihydroxycyclohexane-1,2-dione + H2O. In terms of biological role, catalyzes the dehydration of inosose (2-keto-myo-inositol, 2KMI or 2,4,6/3,5-pentahydroxycyclohexanone) to 3D-(3,5/4)-trihydroxycyclohexane-1,2-dione (D-2,3-diketo-4-deoxy-epi-inositol). The protein is Inosose dehydratase of Glaesserella parasuis serovar 5 (strain SH0165) (Haemophilus parasuis).